The primary structure comprises 289 residues: Heme oxygenase 1, chloroplastic (289 aa).

Residues 1–64 (MAPAAASLTA…SASSSRRMVV (64 aa)) constitute a chloroplast transit peptide. His-96 contributes to the heme b binding site.

Belongs to the heme oxygenase family.

It is found in the plastid. The protein localises to the chloroplast. It carries out the reaction heme b + 3 reduced [NADPH--hemoprotein reductase] + 3 O2 = biliverdin IXalpha + CO + Fe(2+) + 3 oxidized [NADPH--hemoprotein reductase] + 3 H2O + H(+). Its function is as follows. Catalyzes the opening of the heme ring to form the open-chain tetrapyrrole biliverdin IX with the release of iron and carbon monoxide (CO). Is a key enzyme in the synthesis of the chromophore of the phytochrome family of plant photoreceptors. Essential for photoperiod response and repression of flowering through cytochromes that inhibit flowering by affecting both HD1 and EHD1 flowering pathways. This chain is Heme oxygenase 1, chloroplastic (HO1), found in Oryza sativa subsp. japonica (Rice).